The primary structure comprises 156 residues: Snaclec A5 (156 aa).

Positions 1 to 23 (MGRSISVSFGLLVVFLSLSGTGA) are cleaved as a signal peptide. Intrachain disulfides connect cysteine 27–cysteine 38, cysteine 55–cysteine 154, and cysteine 129–cysteine 146. In terms of domain architecture, C-type lectin spans 34 to 155 (HEGHCYKVFN…CGKPYRFTCE (122 aa)).

The protein belongs to the snaclec family. As to quaternary structure, heterodimer; disulfide-linked. As to expression, expressed by the venom gland.

It is found in the secreted. Its function is as follows. Interferes with one step of hemostasis (modulation of platelet aggregation, or coagulation cascade, for example). This Macrovipera lebetinus (Levantine viper) protein is Snaclec A5.